The primary structure comprises 204 residues: Colicin-A (204 aa).

2 consecutive transmembrane segments (helical) span residues 139–161 (SWVL…LGAY) and 165–187 (LGVP…GALI).

Belongs to the channel forming colicin family.

It is found in the cell membrane. Its function is as follows. This colicin is a channel-forming colicin. This class of transmembrane toxins depolarize the cytoplasmic membrane, leading to dissipation of cellular energy. In terms of biological role, colicins are polypeptide toxins produced by and active against E.coli and closely related bacteria. The sequence is that of Colicin-A (caa) from Escherichia coli.